Consider the following 43-residue polypeptide: Protein PsbN (43 aa).

A helical membrane pass occupies residues 3–23 (IATLVAIFISGLLVSFTGYAL).

Belongs to the PsbN family.

It localises to the plastid. Its subcellular location is the chloroplast thylakoid membrane. May play a role in photosystem I and II biogenesis. This chain is Protein PsbN, found in Euonymus alatus (Burning bush).